The following is a 308-amino-acid chain: Lipoyl synthase 2 (308 aa).

Positions 49, 54, 60, 75, 79, 82, and 300 each coordinate [4Fe-4S] cluster. One can recognise a Radical SAM core domain in the interval 61 to 289 (YASGTATFLL…KRIAEGLGFK (229 aa)).

It belongs to the radical SAM superfamily. Lipoyl synthase family. It depends on [4Fe-4S] cluster as a cofactor.

The protein localises to the cytoplasm. The catalysed reaction is [[Fe-S] cluster scaffold protein carrying a second [4Fe-4S](2+) cluster] + N(6)-octanoyl-L-lysyl-[protein] + 2 oxidized [2Fe-2S]-[ferredoxin] + 2 S-adenosyl-L-methionine + 4 H(+) = [[Fe-S] cluster scaffold protein] + N(6)-[(R)-dihydrolipoyl]-L-lysyl-[protein] + 4 Fe(3+) + 2 hydrogen sulfide + 2 5'-deoxyadenosine + 2 L-methionine + 2 reduced [2Fe-2S]-[ferredoxin]. It functions in the pathway protein modification; protein lipoylation via endogenous pathway; protein N(6)-(lipoyl)lysine from octanoyl-[acyl-carrier-protein]: step 2/2. In terms of biological role, catalyzes the radical-mediated insertion of two sulfur atoms into the C-6 and C-8 positions of the octanoyl moiety bound to the lipoyl domains of lipoate-dependent enzymes, thereby converting the octanoylated domains into lipoylated derivatives. This chain is Lipoyl synthase 2, found in Prochlorococcus marinus (strain SARG / CCMP1375 / SS120).